Consider the following 450-residue polypeptide: tRNA-2-methylthio-N(6)-dimethylallyladenosine synthase (450 aa).

Residues 2–119 (KKVFVKTYGC…LPDLIARRQR (118 aa)) enclose the MTTase N-terminal domain. Cysteine 11, cysteine 48, cysteine 82, cysteine 156, cysteine 160, and cysteine 163 together coordinate [4Fe-4S] cluster. The 234-residue stretch at 142 to 375 (RVEGPSAFVS…QATIEENVQR (234 aa)) folds into the Radical SAM core domain. A TRAM domain is found at 378–448 (QNMVGTVQRI…PHSLRGEIVV (71 aa)).

It belongs to the methylthiotransferase family. MiaB subfamily. Monomer. [4Fe-4S] cluster serves as cofactor.

The protein resides in the cytoplasm. The enzyme catalyses N(6)-dimethylallyladenosine(37) in tRNA + (sulfur carrier)-SH + AH2 + 2 S-adenosyl-L-methionine = 2-methylsulfanyl-N(6)-dimethylallyladenosine(37) in tRNA + (sulfur carrier)-H + 5'-deoxyadenosine + L-methionine + A + S-adenosyl-L-homocysteine + 2 H(+). Its function is as follows. Catalyzes the methylthiolation of N6-(dimethylallyl)adenosine (i(6)A), leading to the formation of 2-methylthio-N6-(dimethylallyl)adenosine (ms(2)i(6)A) at position 37 in tRNAs that read codons beginning with uridine. The sequence is that of tRNA-2-methylthio-N(6)-dimethylallyladenosine synthase from Cupriavidus necator (strain ATCC 17699 / DSM 428 / KCTC 22496 / NCIMB 10442 / H16 / Stanier 337) (Ralstonia eutropha).